The sequence spans 431 residues: Na(+)/H(+) antiporter NhaA 1 (431 aa).

11 helical membrane-spanning segments follow: residues 17–37, 56–76, 98–118, 123–143, 154–174, 182–202, 209–229, 301–321, 329–349, 373–393, and 400–420; these read LSGILLLFVTLFAIIVANSNF, FIISMPLRLWINDGLMALFFL, MFPFVASLGGMIVPASIYIAL, FIGFGIPMGTDTAFAIAMLIL, LFLVALAVIDDLGAIIVVATV, EYFLHAAFVYGLIWLLNYFDV, LFLGIFLWIFIHETGVHATIA, FSAFFIMPIFAFSNAGVLLDF, MIVLGVALGLLVGKPLGIFGF, VGFIAGIGFTMSIFIANLAFI, and AIKIGIFTASFMATVIGMILI.

This sequence belongs to the NhaA Na(+)/H(+) (TC 2.A.33) antiporter family.

The protein localises to the cell inner membrane. It catalyses the reaction Na(+)(in) + 2 H(+)(out) = Na(+)(out) + 2 H(+)(in). Functionally, na(+)/H(+) antiporter that extrudes sodium in exchange for external protons. The chain is Na(+)/H(+) antiporter NhaA 1 from Aliarcobacter butzleri (strain RM4018) (Arcobacter butzleri).